Reading from the N-terminus, the 207-residue chain is Dephospho-CoA kinase (207 aa).

The 200-residue stretch at 4-203 (VIGLTGGIAS…EEGYIEKPNY (200 aa)) folds into the DPCK domain. Residue 12–17 (ASGKST) coordinates ATP.

This sequence belongs to the CoaE family.

It is found in the cytoplasm. The catalysed reaction is 3'-dephospho-CoA + ATP = ADP + CoA + H(+). Its pathway is cofactor biosynthesis; coenzyme A biosynthesis; CoA from (R)-pantothenate: step 5/5. Its function is as follows. Catalyzes the phosphorylation of the 3'-hydroxyl group of dephosphocoenzyme A to form coenzyme A. In Staphylococcus aureus (strain USA300), this protein is Dephospho-CoA kinase.